Here is a 355-residue protein sequence, read N- to C-terminus: Heme A synthase (355 aa).

8 helical membrane-spanning segments follow: residues 21–41, 85–102, 136–156, 173–193, 208–228, 264–284, 299–319, and 322–342; these read LARW…VGGI, INLG…FWEW, LFAL…MVAS, LLTA…LGAL, AIGV…VAGL, FLIH…LLLL, ALVI…VSGV, and WVAV…AAAL. Histidine 270 contacts heme. Residue histidine 327 coordinates heme.

This sequence belongs to the COX15/CtaA family. Type 2 subfamily. In terms of assembly, interacts with CtaB. Requires heme b as cofactor.

Its subcellular location is the cell membrane. It carries out the reaction Fe(II)-heme o + 2 A + H2O = Fe(II)-heme a + 2 AH2. It functions in the pathway porphyrin-containing compound metabolism; heme A biosynthesis; heme A from heme O: step 1/1. In terms of biological role, catalyzes the conversion of heme O to heme A by two successive hydroxylations of the methyl group at C8. The first hydroxylation forms heme I, the second hydroxylation results in an unstable dihydroxymethyl group, which spontaneously dehydrates, resulting in the formyl group of heme A. This chain is Heme A synthase, found in Sphingopyxis alaskensis (strain DSM 13593 / LMG 18877 / RB2256) (Sphingomonas alaskensis).